The following is a 295-amino-acid chain: uncharacterized protein (295 aa).

The span at 1–13 (MRHSVARPTRLPR) shows a compositional bias: basic residues. Disordered regions lie at residues 1–111 (MRHS…AGLS) and 183–295 (TSAF…PRDS). The segment covering 57 to 67 (AGPSAGAAARP) has biased composition (low complexity). Residues 68–77 (AAPPPQPREP) show a composition bias toward pro residues. Basic and acidic residues-rich tracts occupy residues 245–257 (LRPK…DRRP) and 280–295 (GEPH…PRDS).

This is an uncharacterized protein from Homo sapiens (Human).